The sequence spans 66 residues: Large ribosomal subunit protein bL28 (66 aa).

It belongs to the bacterial ribosomal protein bL28 family.

In Oenococcus oeni (strain ATCC BAA-331 / PSU-1), this protein is Large ribosomal subunit protein bL28.